We begin with the raw amino-acid sequence, 416 residues long: Enolase (416 aa).

Residue Q160 participates in (2R)-2-phosphoglycerate binding. The active-site Proton donor is the E204. Mg(2+) contacts are provided by D239, E280, and D306. Positions 331, 360, 361, and 382 each coordinate (2R)-2-phosphoglycerate. K331 (proton acceptor) is an active-site residue.

Belongs to the enolase family. The cofactor is Mg(2+).

Its subcellular location is the cytoplasm. The protein resides in the secreted. It localises to the cell surface. It carries out the reaction (2R)-2-phosphoglycerate = phosphoenolpyruvate + H2O. It functions in the pathway carbohydrate degradation; glycolysis; pyruvate from D-glyceraldehyde 3-phosphate: step 4/5. Functionally, catalyzes the reversible conversion of 2-phosphoglycerate (2-PG) into phosphoenolpyruvate (PEP). It is essential for the degradation of carbohydrates via glycolysis. The protein is Enolase of Sulfurisphaera tokodaii (strain DSM 16993 / JCM 10545 / NBRC 100140 / 7) (Sulfolobus tokodaii).